A 525-amino-acid polypeptide reads, in one-letter code: tRNA-splicing endonuclease subunit Sen54 (525 aa).

N-acetylmethionine is present on Met1. A disordered region spans residues 1–46; the sequence is MEPEPEPGSVEVPAGRVLSASELRAARSRSQKLPQRSHGPKDFLPD. The segment covering 7–23 has biased composition (low complexity); the sequence is PGSVEVPAGRVLSASEL. At Ser178 the chain carries Phosphoserine. Tyr180 is subject to Phosphotyrosine. Residues 220 to 232 show a composition bias toward low complexity; sequence LPPVSLAASSSPA. The disordered stretch occupies residues 220 to 273; sequence LPPVSLAASSSPACDQSSQYPEEKSQDSSPRQGSELPLQFLGSSEPCSDLARED.

Belongs to the SEN54 family. In terms of assembly, tRNA splicing endonuclease is a heterotetramer composed of TSEN2, TSEN15, TSEN34/LENG5 and TSEN54. tRNA splicing endonuclease complex also contains proteins of the pre-mRNA 3'-end processing machinery such as CLP1, CPSF1, CPSF4 and CSTF2.

It localises to the nucleus. The protein resides in the nucleolus. Its function is as follows. Non-catalytic subunit of the tRNA-splicing endonuclease complex, a complex responsible for identification and cleavage of the splice sites in pre-tRNA. It cleaves pre-tRNA at the 5' and 3' splice sites to release the intron. The products are an intron and two tRNA half-molecules bearing 2',3' cyclic phosphate and 5'-OH termini. There are no conserved sequences at the splice sites, but the intron is invariably located at the same site in the gene, placing the splice sites an invariant distance from the constant structural features of the tRNA body. The tRNA splicing endonuclease is also involved in mRNA processing via its association with pre-mRNA 3'-end processing factors, establishing a link between pre-tRNA splicing and pre-mRNA 3'-end formation, suggesting that the endonuclease subunits function in multiple RNA-processing events. In Mus musculus (Mouse), this protein is tRNA-splicing endonuclease subunit Sen54 (Tsen54).